Reading from the N-terminus, the 368-residue chain is tRNA(Met) cytidine acetate ligase (368 aa).

ATP-binding positions include 7–20 (IAEFNPFHNGHKYL), Gly96, Asn152, and Arg175.

Belongs to the TmcAL family.

Its subcellular location is the cytoplasm. It carries out the reaction cytidine(34) in elongator tRNA(Met) + acetate + ATP = N(4)-acetylcytidine(34) in elongator tRNA(Met) + AMP + diphosphate. Functionally, catalyzes the formation of N(4)-acetylcytidine (ac(4)C) at the wobble position of elongator tRNA(Met), using acetate and ATP as substrates. First activates an acetate ion to form acetyladenylate (Ac-AMP) and then transfers the acetyl group to tRNA to form ac(4)C34. This chain is tRNA(Met) cytidine acetate ligase, found in Streptococcus pyogenes serotype M5 (strain Manfredo).